The sequence spans 351 residues: Cysteine-rich receptor-like protein kinase 45 (351 aa).

Positions 37–287 (NDFSELVGRG…EILRYIHIAL (251 aa)) constitute a Protein kinase domain. ATP is bound by residues 43–51 (VGRGGFGFV) and Lys65. A Phosphotyrosine modification is found at Tyr110. Residue Asp162 is the Proton acceptor of the active site. Thr197 and Thr202 each carry phosphothreonine. Phosphotyrosine is present on Tyr210.

This sequence belongs to the protein kinase superfamily. Ser/Thr protein kinase family. CRK subfamily. Interacts with CRK36. Autophosphorylated and phosphorylated by CRK36.

The protein localises to the cytoplasm. It is found in the cytosol. The catalysed reaction is L-seryl-[protein] + ATP = O-phospho-L-seryl-[protein] + ADP + H(+). It catalyses the reaction L-threonyl-[protein] + ATP = O-phospho-L-threonyl-[protein] + ADP + H(+). In terms of biological role, forms a complex with CRK36 that may negatively control abscisic acid (ABA) and osmotic stress signal transduction. Involved in plant response to ABA during seed germination, early seedling growth and responses to abiotic stresses by inducing the expression of ABA-responsive genes and stress-inducible genes. Acts as a positive regulator in disease resistance, downstream of NPR1 and WRKY70. This Arabidopsis thaliana (Mouse-ear cress) protein is Cysteine-rich receptor-like protein kinase 45.